A 49-amino-acid chain; its full sequence is Large ribosomal subunit protein bL33 (49 aa).

The protein belongs to the bacterial ribosomal protein bL33 family.

The sequence is that of Large ribosomal subunit protein bL33 from Streptococcus pyogenes serotype M18 (strain MGAS8232).